The following is a 585-amino-acid chain: Clathrin heavy chain linker domain-containing protein 1 (585 aa).

A coiled-coil region spans residues 118–239 (QLEAKMRIID…DLRFRHQRLQ (122 aa)).

The protein is Clathrin heavy chain linker domain-containing protein 1 (Clhc1) of Rattus norvegicus (Rat).